Reading from the N-terminus, the 374-residue chain is Golgi-associated kinase 1B (374 aa).

The Cytoplasmic portion of the chain corresponds to 1 to 38 (MSPDRTGRGSSSSSSSLKRLVCKSFVRAWGRRRPNLRR). The helical; Signal-anchor for type II membrane protein transmembrane segment at 39-61 (AVLLICTASAIYGIVIASQVLRG) threads the bilayer. Over 62–374 (STHPGKALRK…LLQVYTRLDR (313 aa)) the chain is Extracellular. Over residues 136–146 (VRPKKRRKYGA) the composition is skewed to basic residues. Positions 136–177 (VRPKKRRKYGARRPGVVQDTESKKDTLWSKVPNSQHKSQAQS) are disordered. A compositionally biased stretch (polar residues) spans 166–177 (VPNSQHKSQAQS). 2 N-linked (GlcNAc...) asparagine glycosylation sites follow: asparagine 281 and asparagine 314.

It belongs to the GASK family.

It is found in the golgi apparatus membrane. The polypeptide is Golgi-associated kinase 1B (Xenopus laevis (African clawed frog)).